Here is a 351-residue protein sequence, read N- to C-terminus: Dihydroorotate dehydrogenase (quinone) (351 aa).

Residues Ala61 to Lys65 and Thr85 contribute to the FMN site. Residue Lys65 participates in substrate binding. Substrate is bound at residue Asn110–Phe114. Residues Asn139 and Asn172 each coordinate FMN. Residue Asn172 coordinates substrate. Ser175 acts as the Nucleophile in catalysis. Residue Asn177 participates in substrate binding. 2 residues coordinate FMN: Lys217 and Thr245. Asn246–Thr247 is a binding site for substrate. Residues Gly268, Gly297, and Tyr318–Ser319 each bind FMN.

Belongs to the dihydroorotate dehydrogenase family. Type 2 subfamily. In terms of assembly, monomer. The cofactor is FMN.

It localises to the cell membrane. The catalysed reaction is (S)-dihydroorotate + a quinone = orotate + a quinol. It participates in pyrimidine metabolism; UMP biosynthesis via de novo pathway; orotate from (S)-dihydroorotate (quinone route): step 1/1. Its function is as follows. Catalyzes the conversion of dihydroorotate to orotate with quinone as electron acceptor. The chain is Dihydroorotate dehydrogenase (quinone) from Xanthomonas oryzae pv. oryzae (strain PXO99A).